A 355-amino-acid chain; its full sequence is Probable poly-beta-1,6-N-acetyl-D-glucosamine export protein (355 aa).

A run of 10 helical transmembrane segments spans residues alanine 13–leucine 30, tyrosine 45–leucine 67, isoleucine 74–serine 96, valine 116–isoleucine 138, leucine 145–leucine 167, methionine 187–asparagine 204, phenylalanine 211–valine 233, serine 243–valine 262, methionine 269–isoleucine 291, and threonine 306–leucine 328.

It belongs to the acyltransferase 3 family.

The protein localises to the cell membrane. In terms of biological role, presumably involved in the export of the biofilm adhesin polysaccharide poly-beta-1,6-N-acetyl-D-glucosamine (PNAG, also referred to as PIA) across the cell membrane. The sequence is that of Probable poly-beta-1,6-N-acetyl-D-glucosamine export protein (icaC) from Staphylococcus epidermidis.